The following is a 283-amino-acid chain: Cilia- and flagella-associated protein 77 (283 aa).

The tract at residues 151 to 170 (DQEDRRQKEPPPIPPNMTFG) is disordered.

It belongs to the CFAP77 family. In terms of assembly, microtubule inner protein component of sperm flagellar doublet microtubules.

Its subcellular location is the cytoplasm. It localises to the cytoskeleton. The protein resides in the cilium axoneme. The protein localises to the flagellum axoneme. In terms of biological role, microtubule inner protein (MIP) part of the dynein-decorated doublet microtubules (DMTs) in cilia axoneme, which is required for motile cilia beating. The polypeptide is Cilia- and flagella-associated protein 77 (Mus musculus (Mouse)).